The following is a 549-amino-acid chain: Dihydroxy-acid dehydratase (549 aa).

Asp-78 contacts Mg(2+). Cys-119 is a [2Fe-2S] cluster binding site. 2 residues coordinate Mg(2+): Asp-120 and Lys-121. Residue Lys-121 is modified to N6-carboxylysine. Cys-191 contributes to the [2Fe-2S] cluster binding site. Mg(2+) is bound at residue Glu-441. Ser-466 acts as the Proton acceptor in catalysis.

This sequence belongs to the IlvD/Edd family. In terms of assembly, homodimer. [2Fe-2S] cluster serves as cofactor. It depends on Mg(2+) as a cofactor.

It catalyses the reaction (2R)-2,3-dihydroxy-3-methylbutanoate = 3-methyl-2-oxobutanoate + H2O. The catalysed reaction is (2R,3R)-2,3-dihydroxy-3-methylpentanoate = (S)-3-methyl-2-oxopentanoate + H2O. It functions in the pathway amino-acid biosynthesis; L-isoleucine biosynthesis; L-isoleucine from 2-oxobutanoate: step 3/4. The protein operates within amino-acid biosynthesis; L-valine biosynthesis; L-valine from pyruvate: step 3/4. Its function is as follows. Functions in the biosynthesis of branched-chain amino acids. Catalyzes the dehydration of (2R,3R)-2,3-dihydroxy-3-methylpentanoate (2,3-dihydroxy-3-methylvalerate) into 2-oxo-3-methylpentanoate (2-oxo-3-methylvalerate) and of (2R)-2,3-dihydroxy-3-methylbutanoate (2,3-dihydroxyisovalerate) into 2-oxo-3-methylbutanoate (2-oxoisovalerate), the penultimate precursor to L-isoleucine and L-valine, respectively. The sequence is that of Dihydroxy-acid dehydratase from Methanobrevibacter smithii (strain ATCC 35061 / DSM 861 / OCM 144 / PS).